Here is a 668-residue protein sequence, read N- to C-terminus: SHC SH2 domain-binding protein 1 (668 aa).

Position 2 is an N-acetylalanine (Ala2). Phosphoserine occurs at positions 31, 44, and 273. PbH1 repeat units lie at residues 428–451, 452–473, 474–496, 497–518, and 526–548; these read GMDV…LIIH, HGKT…TVRT, SAEL…EIYP, GSKC…LIKD, and IPKI…VLVK. Ser630 is modified (phosphoserine).

In terms of assembly, interacts directly with isoform p52shc of SHC1 via its SH2 domain. Interacts with TRIM71; leading to enhanced SHCBP1 protein stability. Interacts with both members of the centralspindlin complex, KIF23 and RACGAP1. Expressed in spleen, lung and heart with higher expression in testis. No expression in brain, liver and skeletal muscle. Elevated expression in actively cycling cells.

It localises to the midbody. The protein localises to the cytoplasm. The protein resides in the cytoskeleton. It is found in the spindle. Its function is as follows. May play a role in signaling pathways governing cellular proliferation, cell growth and differentiation. May be a component of a novel signaling pathway downstream of Shc. Acts as a positive regulator of FGF signaling in neural progenitor cells. This Mus musculus (Mouse) protein is SHC SH2 domain-binding protein 1 (Shcbp1).